A 1929-amino-acid polypeptide reads, in one-letter code: Myoferlin (1929 aa).

The segment at M1 to T53 is disordered. Residues G27–D36 show a composition bias toward acidic residues. 2 consecutive C2 domains span residues V62–V179 and E218–D354. The Ca(2+) site is built by D267, D275, D323, D325, and D331. Basic residues predominate over residues R898–D907. The segment at R898–L918 is disordered. C2 domains follow at residues G996–Y1124, R1159–E1283, I1408–G1527, and G1645–S1793. Residues D1028, D1034, D1090, and D1092 each coordinate Ca(2+). The Ca(2+) site is built by D1442, D1448, D1497, D1499, D1764, S1767, and D1770. The span at D1845 to P1858 shows a compositional bias: basic and acidic residues. The disordered stretch occupies residues D1845–P1867. Residues W1894 to Y1914 form a helical membrane-spanning segment.

Belongs to the ferlin family. The cofactor is Ca(2+).

It is found in the cell membrane. The protein localises to the nucleus membrane. The protein resides in the cytoplasmic vesicle membrane. May play a role in membrane regeneration and repair. This is Myoferlin (myof) from Xenopus tropicalis (Western clawed frog).